Here is a 2028-residue protein sequence, read N- to C-terminus: Phosphatidylinositol 4-kinase alpha 1 (2028 aa).

The disordered stretch occupies residues 184–241; the sequence is PASPKEQRQQNSANSETDTSSSQGSPISTNRYPSGKTEMASPGDEVASHGSNLSSKSS. Polar residues predominate over residues 192–215; that stretch reads QQNSANSETDTSSSQGSPISTNRY. Low complexity predominate over residues 231–241; the sequence is SHGSNLSSKSS. One can recognise a PIK helical domain in the interval 1483–1659; the sequence is TEYAKTAFSV…NAAFQEILPQ (177 aa). A pleckstrin homology (PH) domain conferring phosphoinositide binding specificity region spans residues 1660 to 1773; sequence VRQHIIDGFS…VKPQACIFKV (114 aa). Residues 1734 to 2012 enclose the PI3K/PI4K catalytic domain; that stretch reads VDSGIPLQSA…VCTDAYNKWT (279 aa). A G-loop region spans residues 1740–1746; it reads LQSAAKV. A catalytic loop region spans residues 1876-1884; sequence QPKDRHNGN. The tract at residues 1895–1920 is activation loop; the sequence is HIDFGFILETSPGGNMRFESAHFKLS.

The protein belongs to the PI3/PI4-kinase family. Type III PI4K subfamily. Interacts in vitro with actin filaments via its PH domain. In terms of tissue distribution, present in leaves and inflorescences.

It is found in the membrane. Its subcellular location is the cytoplasm. The protein localises to the perinuclear region. It catalyses the reaction a 1,2-diacyl-sn-glycero-3-phospho-(1D-myo-inositol) + ATP = a 1,2-diacyl-sn-glycero-3-phospho-(1D-myo-inositol 4-phosphate) + ADP + H(+). With respect to regulation, repressed by PtdIns4P, adenosine and wortmannin, but stimulated by other negatively charged lipids such as PtdIns3P, PtdOH, and phosphatidyl-serine (PtdSer). Its function is as follows. Acts on phosphatidylinositol (PtdIns) in the first committed step in the production of the second messenger inositol-1,4,5,-trisphosphate. Can bind to phosphatidylinositol 4-monophosphate (PI-4-P or PtdIns4P), phosphatidylinositol 4,5-bisphosphate (PI-4,5-P2 or PtdIns4,5P2), and phosphatidic acid (PtdOH), but not to 3-phosphoinositides. May function upstream of the cold response phosphoinositide-dependent phospholipase C (PI-PLC) pathway. The polypeptide is Phosphatidylinositol 4-kinase alpha 1 (Arabidopsis thaliana (Mouse-ear cress)).